Consider the following 1338-residue polypeptide: Fanconi anemia group I protein (1338 aa).

Residue lysine 525 forms a Glycyl lysine isopeptide (Lys-Gly) (interchain with G-Cter in ubiquitin) linkage. Serine 558 and serine 561 each carry phosphoserine. The residue at position 567 (threonine 567) is a Phosphothreonine.

The protein belongs to the Fanconi anemia group I protein family. In terms of assembly, homodimer. Part of a FANCI-FANCD2 heterodimeric complex that binds and scans dsDNA for DNA damage. Interacts with FANCL. Interacts with MTMR15/FAN1. Interacts with POLN. Interacts with UBL5; the interaction promotes FANCI homodimerization. Post-translationally, monoubiquitinated by FANCL during S phase and upon genotoxic stress. Deubiquitinated by USP1 as cells enter G2/M, or once DNA repair is completed. Monoubiquitination requires the FANCA-FANCB-FANCC-FANCE-FANCF-FANCG-FANCM complex. Ubiquitination is required for binding to chromatin, DNA repair, and normal cell cycle progression. Monoubiquitination is stimulated by DNA-binding. Phosphorylated in response to DNA damage by ATM and/or ATR. Phosphorylation of FANCI promotes ubiquitination of FANCD2, which prevents DNA release from the FANCI-FANCD2 complex.

In terms of biological role, plays an essential role in the repair of DNA double-strand breaks by homologous recombination and in the repair of interstrand DNA cross-links (ICLs) by promoting FANCD2 monoubiquitination by FANCL and participating in recruitment to DNA repair sites. The FANCI-FANCD2 complex binds and scans double-stranded DNA (dsDNA) for DNA damage; this complex stalls at DNA junctions between double-stranded DNA and single-stranded DNA. Participates in S phase and G2 phase checkpoint activation upon DNA damage. The chain is Fanconi anemia group I protein from Gallus gallus (Chicken).